Reading from the N-terminus, the 272-residue chain is Acidic leucine-rich nuclear phosphoprotein 32-related protein 2 (272 aa).

3 LRR repeats span residues 57 to 78 (SLEE…PRLP), 79 to 100 (ALRR…AAVA), and 106 to 127 (TLRH…APLA). The 46-residue stretch at 139 to 184 (CPVTKAKGYRDKVFALIPSLKFLDGMDAEGNDCLDSDDEEDEEEDE) folds into the LRRCT domain. The tract at residues 163-272 (GMDAEGNDCL…DSEDDANGDN (110 aa)) is disordered. Residues 164–241 (MDAEGNDCLD…DEAGADEEDE (78 aa)) are compositionally biased toward acidic residues. The span at 248–257 (SKGSSGSAQP) shows a compositional bias: polar residues.

The protein belongs to the ANP32 family.

This Oryza sativa subsp. japonica (Rice) protein is Acidic leucine-rich nuclear phosphoprotein 32-related protein 2.